A 111-amino-acid chain; its full sequence is NADH-ubiquinone oxidoreductase chain 4 (111 aa).

Residues 35–55 (LITSLFSWLDITVFLTGLSAF) form a helical membrane-spanning segment.

The protein belongs to the complex I subunit 4 family.

Its subcellular location is the mitochondrion membrane. The enzyme catalyses a ubiquinone + NADH + 5 H(+)(in) = a ubiquinol + NAD(+) + 4 H(+)(out). Its function is as follows. Core subunit of the mitochondrial membrane respiratory chain NADH dehydrogenase (Complex I) that is believed to belong to the minimal assembly required for catalysis. Complex I functions in the transfer of electrons from NADH to the respiratory chain. The immediate electron acceptor for the enzyme is believed to be ubiquinone. The polypeptide is NADH-ubiquinone oxidoreductase chain 4 (MT-ND4) (Caiman crocodilus (Spectacled caiman)).